A 333-amino-acid chain; its full sequence is Anthranilate phosphoribosyltransferase (333 aa).

5-phospho-alpha-D-ribose 1-diphosphate contacts are provided by residues G80, 83–84, S88, 90–93, 108–116, and S120; these read GD, NIST, and KHGNRSVSS. G80 contacts anthranilate. S92 lines the Mg(2+) pocket. N111 serves as a coordination point for anthranilate. Position 166 (R166) interacts with anthranilate. Positions 224 and 225 each coordinate Mg(2+).

It belongs to the anthranilate phosphoribosyltransferase family. Homodimer. The cofactor is Mg(2+).

It carries out the reaction N-(5-phospho-beta-D-ribosyl)anthranilate + diphosphate = 5-phospho-alpha-D-ribose 1-diphosphate + anthranilate. Its pathway is amino-acid biosynthesis; L-tryptophan biosynthesis; L-tryptophan from chorismate: step 2/5. In terms of biological role, catalyzes the transfer of the phosphoribosyl group of 5-phosphorylribose-1-pyrophosphate (PRPP) to anthranilate to yield N-(5'-phosphoribosyl)-anthranilate (PRA). The sequence is that of Anthranilate phosphoribosyltransferase from Yersinia pseudotuberculosis serotype O:1b (strain IP 31758).